Here is a 343-residue protein sequence, read N- to C-terminus: Phosphate acyltransferase (343 aa).

It belongs to the PlsX family. Homodimer. Probably interacts with PlsY.

Its subcellular location is the cytoplasm. It carries out the reaction a fatty acyl-[ACP] + phosphate = an acyl phosphate + holo-[ACP]. The protein operates within lipid metabolism; phospholipid metabolism. Functionally, catalyzes the reversible formation of acyl-phosphate (acyl-PO(4)) from acyl-[acyl-carrier-protein] (acyl-ACP). This enzyme utilizes acyl-ACP as fatty acyl donor, but not acyl-CoA. In Halorhodospira halophila (strain DSM 244 / SL1) (Ectothiorhodospira halophila (strain DSM 244 / SL1)), this protein is Phosphate acyltransferase.